A 1620-amino-acid chain; its full sequence is DNA (cytosine-5)-methyltransferase 1 (1620 aa).

The disordered stretch occupies residues 1-21; sequence MPARTAPARVPALASPAGSLP. The interval 1–120 is interaction with DMAP1; sequence MPARTAPARV…SRPTWRAEMA (120 aa). Residues 1–145 form an interaction with DNMT3A region; the sequence is MPARTAPARV…RRSKSDSDTL (145 aa). Interaction with the PRC2/EED-EZH2 complex regions lie at residues 1-343 and 305-609; these read MPAR…SERK and APET…RVMG. Residue serine 15 is modified to Phosphoserine. Residues 16–109 form the DMAP1-binding domain; it reads PAGSLPDHVR…TQKANGCPAN (94 aa). Lysine 70 is modified (N6,N6-dimethyllysine; by EHMT2). Residues 96-369 form a disordered region; that stretch reads THTLTQKANG…PECGQHLDDP (274 aa). Residues 126–137 show a composition bias toward basic residues; the sequence is PRSRPKPRGPRR. Serine 138 is subject to Phosphoserine. Position 139 is an N6-methyllysine; by SETD7 (lysine 139). The residue at position 140 (serine 140) is a Phosphoserine. A compositionally biased stretch (polar residues) spans 144–155; sequence TLSVETSPSSVA. Serine 146 is subject to Phosphoserine; by CK1. The segment at 147–217 is interaction with DNMT3B; it reads VETSPSSVAT…SGAAAAVEKL (71 aa). Serine 150 and serine 152 each carry phosphoserine. The interaction with PCNA stretch occupies residues 161 to 172; the sequence is RQTTITAHFTKG. At threonine 164 the chain carries Phosphothreonine. The residue at position 171 (lysine 171) is an N6-acetyllysine. A Nuclear localization signal motif is present at residues 175–202; it reads KRKPKEESEEGNSAESAAEERDQDKKRR. Residues 192 to 205 are compositionally biased toward basic and acidic residues; that stretch reads AEERDQDKKRRVVD. Serine 240 is modified (phosphoserine). Basic and acidic residues-rich tracts occupy residues 246-267 and 286-300; these read RELS…PETH and QPRD…KEAE. Lysine 255 carries the N6-acetyllysine; alternate modification. A Glycyl lysine isopeptide (Lys-Gly) (interchain with G-Cter in SUMO2); alternate cross-link involves residue lysine 255. Over residues 308–317 the composition is skewed to acidic residues; sequence TPEDRDEDER. A DNA replication foci-targeting sequence region spans residues 328-556; sequence KLESHTVPVQ…NVNRFTEDSL (229 aa). 2 residues coordinate Zn(2+): cysteine 359 and cysteine 362. An N6-acetyllysine modification is found at lysine 372. 2 residues coordinate Zn(2+): cysteine 420 and histidine 424. Serine 515 and serine 555 each carry phosphoserine. A CXXC-type zinc finger spans residues 649–695; the sequence is NAMKRRRCGVCEVCQQPECGKCKACKDMVKFGGTGRSKQACLKRRCP. Zn(2+) contacts are provided by cysteine 656, cysteine 659, cysteine 662, cysteine 667, cysteine 670, cysteine 673, cysteine 689, and cysteine 694. The segment at 696 to 757 is autoinhibitory linker; the sequence is NLAVKEADDD…TYYQKVSIDE (62 aa). Residues 696 to 813 are interaction with HDAC1; it reads NLAVKEADDD…TDTVLGATSD (118 aa). A compositionally biased stretch (acidic residues) spans 702–713; the sequence is ADDDEEADDDVS. The segment at 702-732 is disordered; sequence ADDDEEADDDVSEMPSPKKLHQGKKKKQNKD. A phosphoserine mark is found at serine 713 and serine 717. The span at 719 to 730 shows a compositional bias: basic residues; sequence KKLHQGKKKKQN. Phosphoserine is present on serine 735. N6-acetyllysine is present on lysine 752. Residues 758–884 enclose the BAH 1 domain; the sequence is EMLEVGDCVS…QEYARFESPP (127 aa). The residue at position 882 (serine 882) is a Phosphoserine. N6-acetyllysine occurs at positions 895, 961, 965, and 979. A BAH 2 domain is found at 976–1103; that stretch reads HYRKYSDYIK…SKTKNFEDPP (128 aa). A disordered region spans residues 1097-1136; sequence KNFEDPPNHARSPGNKGKGKGKGKGKGKHQVSEPKEPEAA. 6 repeat units span residues 1112 to 1113, 1114 to 1115, 1116 to 1117, 1118 to 1119, 1120 to 1121, and 1122 to 1123. The segment at 1112 to 1125 is 7 X 2 AA tandem repeats of K-G; that stretch reads KGKGKGKGKGKGKH. Over residues 1113-1125 the composition is skewed to basic residues; sequence GKGKGKGKGKGKH. N6-acetyllysine is present on residues lysine 1114, lysine 1116, lysine 1118, lysine 1120, lysine 1122, and lysine 1124. The 7; approximate repeat unit spans residues 1124-1125; sequence KH. Residues 1124–1620 form an interaction with the PRC2/EED-EZH2 complex region; it reads KHQVSEPKEP…KAKEEAATKD (497 aa). The span at 1126-1135 shows a compositional bias: basic and acidic residues; that stretch reads QVSEPKEPEA. An SAM-dependent MTase C5-type domain is found at 1142–1601; sequence LRTLDVFSGC…LEIKLCLLSS (460 aa). Residues 1142–1620 are catalytic; sequence LRTLDVFSGC…KAKEEAATKD (479 aa). S-adenosyl-L-methionine-binding positions include serine 1149, 1153 to 1154, 1171 to 1172, and 1193 to 1194; these read GL, EM, and DC. Cysteine 1229 is a catalytic residue. Residues lysine 1352 and lysine 1418 each carry the N6-acetyllysine modification. Valine 1582 contributes to the S-adenosyl-L-methionine binding site. Lysine 1611 participates in a covalent cross-link: Glycyl lysine isopeptide (Lys-Gly) (interchain with G-Cter in SUMO2).

This sequence belongs to the class I-like SAM-binding methyltransferase superfamily. C5-methyltransferase family. As to quaternary structure, homodimer. Forms a stable complex with E2F1, BB1 and HDAC1. Forms a complex with DMAP1 and HDAC2, with direct interaction. Interacts with the PRC2/EED-EZH2 complex. Probably part of a corepressor complex containing ZNF304, TRIM28, SETDB1 and DNMT1. Interacts with UHRF1; promoting its recruitment to hemimethylated DNA. Interacts with USP7, promoting its deubiquitination. Interacts with BAZ2A/TIP5. Interacts with PCNA. Interacts with MBD2 and MBD3. Interacts with DNMT3A and DNMT3B. Interacts with UBC9. Interacts with HDAC1. Interacts with CSNK1D. Interacts with SIRT7. Interacts with ZNF263; recruited to the SIX3 promoter along with other proteins involved in chromatin modification and transcriptional corepression where it contributes to transcriptional repression. Interacts with L3MBTL3 and DCAF5; the interaction requires DNMT1 methylation at Lys-139 and is necessary to target DNMT1 for ubiquitination by the CRL4-DCAF5 E3 ubiquitin ligase complex and proteasomal degradation. Interacts with PHF20L1; the interaction requires DNMT1 methylation at Lys-139 and protects DNMT1 from ubiquitination and proteasomal degradation. Post-translationally, sumoylated; sumoylation increases activity. In terms of processing, phosphorylation at Ser-146 by CK1 reduces DNA-binding activity. Acetylation on multiple lysines, mainly by KAT2B/PCAF, regulates cell cycle G(2)/M transition. Deacetylation of Lys-1352 and Lys-1418 by SIRT1 increases methyltransferase activity. Post-translationally, phosphorylation of Ser-152 by CDKs is important for enzymatic activity and protein stability. Phosphorylation of Ser-140 by AKT1 prevents methylation by SETD7 thereby increasing DNMT1 stability. In terms of processing, methylation at Lys-139 by SETD7 is necessary for the regulation of DNMT1 proteasomal degradation. Ubiquitinated by UHRF1; interaction with USP7 counteracts ubiquitination by UHRF1 by promoting deubiquitination and preventing degradation by the proteasome. As to expression, isoform 1 is expressed in embryonic stem cells and in somatic tissues. Isoform 2 is expressed in oocytes, preimplantation embryos, testis and in skeletal muscle during myogenesis.

It is found in the nucleus. It localises to the cytoplasm. It carries out the reaction a 2'-deoxycytidine in DNA + S-adenosyl-L-methionine = a 5-methyl-2'-deoxycytidine in DNA + S-adenosyl-L-homocysteine + H(+). Allosterically regulated. The binding of 5-methylcytosine-containing DNA to the N-terminal parts of DNMT1 causes an allosteric activation of the catalytic domain by a direct interaction of its Zn-binding domain with the catalytic domain. Functionally, methylates CpG residues. Preferentially methylates hemimethylated DNA. Associates with DNA replication sites in S phase maintaining the methylation pattern in the newly synthesized strand, that is essential for epigenetic inheritance. Associates with chromatin during G2 and M phases to maintain DNA methylation independently of replication. It is responsible for maintaining methylation patterns established in development. DNA methylation is coordinated with methylation of histones. Mediates transcriptional repression by direct binding to HDAC2. In association with DNMT3B and via the recruitment of CTCFL/BORIS, involved in activation of BAG1 gene expression by modulating dimethylation of promoter histone H3 at H3K4 and H3K9. Probably forms a corepressor complex required for activated KRAS-mediated promoter hypermethylation and transcriptional silencing of tumor suppressor genes (TSGs) or other tumor-related genes in colorectal cancer (CRC) cells. Also required to maintain a transcriptionally repressive state of genes in undifferentiated embryonic stem cells (ESCs). Associates at promoter regions of tumor suppressor genes (TSGs) leading to their gene silencing. Promotes tumor growth. The polypeptide is DNA (cytosine-5)-methyltransferase 1 (Dnmt1) (Mus musculus (Mouse)).